The primary structure comprises 233 residues: Octanoyltransferase (233 aa).

The 179-residue stretch at 34–212 (PDRPDVLLLL…AFAQTFELDL (179 aa)) folds into the BPL/LPL catalytic domain. Residues 76-83 (RGGEVTHH), 143-145 (AIG), and 156-158 (GFA) each bind substrate. Residue cysteine 174 is the Acyl-thioester intermediate of the active site.

This sequence belongs to the LipB family.

The protein localises to the cytoplasm. It catalyses the reaction octanoyl-[ACP] + L-lysyl-[protein] = N(6)-octanoyl-L-lysyl-[protein] + holo-[ACP] + H(+). Its pathway is protein modification; protein lipoylation via endogenous pathway; protein N(6)-(lipoyl)lysine from octanoyl-[acyl-carrier-protein]: step 1/2. Functionally, catalyzes the transfer of endogenously produced octanoic acid from octanoyl-acyl-carrier-protein onto the lipoyl domains of lipoate-dependent enzymes. Lipoyl-ACP can also act as a substrate although octanoyl-ACP is likely to be the physiological substrate. This chain is Octanoyltransferase, found in Synechococcus elongatus (strain ATCC 33912 / PCC 7942 / FACHB-805) (Anacystis nidulans R2).